Consider the following 313-residue polypeptide: Glyoxylate/hydroxypyruvate reductase A (313 aa).

Arg-228 is a catalytic residue. The active-site Proton donor is His-276.

The protein belongs to the D-isomer specific 2-hydroxyacid dehydrogenase family. GhrA subfamily.

The protein resides in the cytoplasm. It carries out the reaction glycolate + NADP(+) = glyoxylate + NADPH + H(+). The catalysed reaction is (R)-glycerate + NAD(+) = 3-hydroxypyruvate + NADH + H(+). The enzyme catalyses (R)-glycerate + NADP(+) = 3-hydroxypyruvate + NADPH + H(+). Catalyzes the NADPH-dependent reduction of glyoxylate and hydroxypyruvate into glycolate and glycerate, respectively. The polypeptide is Glyoxylate/hydroxypyruvate reductase A (Serratia proteamaculans (strain 568)).